Here is a 173-residue protein sequence, read N- to C-terminus: MSLVRQNFHEECERGINRQINMELYASYLYLAMSQHFDRDDVALPGFREFFAKASEEEREHAIKLMRYQCGRGGRIVYQDIAKPQTTEWASGLEAMEMALKIEREVNESLLALRGVANKNNDSQFCEFLEGEFLGEQVSDIKKLAGYVTNLKRCGPGLGEYIFDKETLQGGEK.

One can recognise a Ferritin-like diiron domain in the interval 6 to 155 (QNFHEECERG…GYVTNLKRCG (150 aa)). Glu-23, Glu-58, His-61, Glu-103, and Gln-137 together coordinate Fe cation.

It belongs to the ferritin family. As to quaternary structure, oligomer of 24 subunits. There are two types of subunits: L (light) chain and H (heavy) chain. The functional molecule is roughly spherical and contains a central cavity into which the insoluble mineral iron core is deposited.

It localises to the cytoplasm. It carries out the reaction 4 Fe(2+) + O2 + 4 H(+) = 4 Fe(3+) + 2 H2O. In terms of biological role, stores iron in a soluble, non-toxic, readily available form. Important for iron homeostasis. Has ferroxidase activity. Iron is taken up in the ferrous form and deposited as ferric hydroxides after oxidation. This chain is Ferritin heavy chain, found in Echinococcus granulosus (Hydatid tapeworm).